Here is a 721-residue protein sequence, read N- to C-terminus: Ribonuclease R (721 aa).

The region spanning 249 to 587 (RRSIIDREII…VHRLLWMFIF (339 aa)) is the RNB domain. The 81-residue stretch at 639–719 (GKEFIGVVTT…LTRKIDFELV (81 aa)) folds into the S1 motif domain.

This sequence belongs to the RNR ribonuclease family. RNase R subfamily.

The protein localises to the cytoplasm. The enzyme catalyses Exonucleolytic cleavage in the 3'- to 5'-direction to yield nucleoside 5'-phosphates.. 3'-5' exoribonuclease that releases 5'-nucleoside monophosphates and is involved in maturation of structured RNAs. The chain is Ribonuclease R from Ureaplasma parvum serovar 3 (strain ATCC 700970).